The primary structure comprises 596 residues: Arginine--tRNA ligase (596 aa).

A 'HIGH' region motif is present at residues 139–149 (ANPTGPLHVGH).

This sequence belongs to the class-I aminoacyl-tRNA synthetase family. In terms of assembly, monomer.

It localises to the cytoplasm. The catalysed reaction is tRNA(Arg) + L-arginine + ATP = L-arginyl-tRNA(Arg) + AMP + diphosphate. The polypeptide is Arginine--tRNA ligase (Paraburkholderia phytofirmans (strain DSM 17436 / LMG 22146 / PsJN) (Burkholderia phytofirmans)).